The following is a 139-amino-acid chain: MFKEFKAFAMRGNVVDMAVGIIIGAAFGAIVKSLVDDVIMPPIGLLLGNVDFSNLFIVLKDGAEVAPPYASVAAAQAAGAVTLNYGLFINAVVSFTIVAFAVFLLIRAINKLKAEEPAAPEVTPEDIVLLREIRDALKK.

Helical transmembrane passes span 14-34 (VVDM…VKSL) and 86-106 (GLFI…FLLI).

Belongs to the MscL family. As to quaternary structure, homopentamer.

The protein resides in the cell inner membrane. In terms of biological role, channel that opens in response to stretch forces in the membrane lipid bilayer. May participate in the regulation of osmotic pressure changes within the cell. This chain is Large-conductance mechanosensitive channel, found in Methylobacillus flagellatus (strain ATCC 51484 / DSM 6875 / VKM B-1610 / KT).